Consider the following 535-residue polypeptide: Bifunctional purine biosynthesis protein PurH (535 aa).

The region spanning 6–151 (TRLPVRRALI…KNHKDVAIVV (146 aa)) is the MGS-like domain.

The protein belongs to the PurH family.

The enzyme catalyses (6R)-10-formyltetrahydrofolate + 5-amino-1-(5-phospho-beta-D-ribosyl)imidazole-4-carboxamide = 5-formamido-1-(5-phospho-D-ribosyl)imidazole-4-carboxamide + (6S)-5,6,7,8-tetrahydrofolate. It catalyses the reaction IMP + H2O = 5-formamido-1-(5-phospho-D-ribosyl)imidazole-4-carboxamide. Its pathway is purine metabolism; IMP biosynthesis via de novo pathway; 5-formamido-1-(5-phospho-D-ribosyl)imidazole-4-carboxamide from 5-amino-1-(5-phospho-D-ribosyl)imidazole-4-carboxamide (10-formyl THF route): step 1/1. The protein operates within purine metabolism; IMP biosynthesis via de novo pathway; IMP from 5-formamido-1-(5-phospho-D-ribosyl)imidazole-4-carboxamide: step 1/1. In Azotobacter vinelandii (strain DJ / ATCC BAA-1303), this protein is Bifunctional purine biosynthesis protein PurH.